Reading from the N-terminus, the 1938-residue chain is MSSDADMAIFGEAAPYLRKSEKERIEAQNKPFDAKSSVFVADPKESFVKATVQSREGGKVTAKTEAGATVTVKEDQVFPMNPPKYDKIEDMAMMTHLHEPAVLYNLKERYAAWMIYTYSGLFCVTVNPYKWLPVYNAEVVTAYRGKKRQEAPPHIFSISDNAYQFMLTDRENQSILITGESGAGKTVNTKRVIQYFATIAVTGDKKKEEATSGKMQGTLEDQIISANPLLEAFGNAKTVRNDNSSRFGKFIRIHFGTTGKLASADIETYLLEKSRVTFQLKAERSYHIFYQIMSNKKPDLIEMLLITTNPYDYAFVSQGEITVPSIDDQEELMATDSAIDILGFTSDERVSIYKLTGAVMHYGNMKFKQKQREEQAEPDGTEVADKAAYLQSLNSADLLKALCYPRVKVGNEYVTKGQTVQQVYNAVGALAKAVYEKMFLWMVTRINQQLDTKQPRQYFIGVLDIAGFEIFDFNSLEQLCINFTNEKLQQFFNHHMFVLEQEEYKKEGIEWEFIDFGMDLAACIELIEKPMGIFSILEEECMFPKATDTSFKNKLYEQHLGKSNNFQKPKPAKGKVEAHFSLVHYAGTVDYNITGWLDKNKDPLNETVVGLYQKSAMKTLAFLFTGTAAAEAEGGGKKGGKKKGSSFQTVSALFRENLNKLMTNLRSTHPHFVRCIIPNETKTPGAMEHELVLHQLRCNGVLEGIRICRKGFPSRILYADFKQRYKVLNASAIPEGQFIDSKKASEKLLGSIDVDHTQYKFGHTKVFFKAGLLGLLEEMRDDKLAQLITRTQAMCRGFLARVEYKKMVERRESIFCIQYNIRAFMNVKHWPWMKLYFKIKPLLKSAETEKEMANMKEEFEKTKESLAKAEAKRKELEEKMVALMQEKNDLQLQVQAEADSLADAEERCDQLIKTKIQLEAKIKEVTERAEDEEEINAELTAKKRKLEDECSELKKDIDDLELTLAKVEKEKHATENKVKNLTEEMAGLDETIAKLTKEKKALQEAHQQTLDDLQAEEDKVNTLTKAKTKLEQQVDDLEGSLEQEKKIRMDLERAKRKLEGDLKLAQESTMDIENDKQQLDEKLKKKEFEMSNLQSKIEDEQALAMQLQKKIKELQARIEELEEEIEAERASRAKAEKQRSDLSRELEEISERLEEAGGATSAQIEMNKKREAEFQKMRRDLEEATLQHEATAATLRKKHADSVAELGEQIDNLQRVKQKLEKEKSELKMEIDDLASNMETVSKAKGNLEKMCRTLEDQVSELKTKEEEHQRLINDLSAQRARLQTESGEFSRQLDEKDSLVSQLSRGKQAFTQQIEELKRQLEEEIKAKSALAHALQSARHDCDLLREQYEEEQEAKAELQRAMSKANSEVAQWRTKYETDAIQRTEELEEAKKKLAQRLQDAEEHVEAVNAKCASLEKTKQRLQNEVEDLMIDVERTNAACAALDKKQRNFDKILAEWKHKYEETHAELEASQKESRSLSTELFKVKNAYEESLDQLETLKRENKNLQQEISDLTEQIAEGGKRIHELEKVKKQVEQEKSELQAALEEAEASLEHEEGKILRIQLELNQVKSEIDRKIAEKDEEIDQLKRNHIRVVESMQSTLDAEIRSRNDAIRIKKKMEGDLNEMEIQLNHANRMAAEALRNYRNTQGILKDTQLHLDDALRGQEDLKEQLAMVERRANLLQAEIEELRATLEQTERSRKVAEQELLDASERVQLLHTQNTSLINTKKKLETDISQIQGEMEDIVQEARNAEEKAKKAITDAAMMAEELKKEQDTSAHLERMKKNMEQTVKDLQHRLDEAEQLALKGGKKQIQKLEARVRELEAEVESEQKRNVEAVKGLRKHERRVKELTYQTEEDRKNVLRLQDLVDKLQAKVKSYKRQAEEAEEQSNVNLSKFRKLQHELEEAEERADIAESQVNKLRVKSREVHTKVISEE.

Residues 33 to 82 (DAKSSVFVADPKESFVKATVQSREGGKVTAKTEAGATVTVKEDQVFPMNP) enclose the Myosin N-terminal SH3-like domain. Ser36 bears the Phosphoserine mark. Phosphothreonine occurs at positions 64 and 69. Positions 86–781 (DKIEDMAMMT…LLGLLEEMRD (696 aa)) constitute a Myosin motor domain. Position 179–186 (179–186 (GESGAGKT)) interacts with ATP. Tyr389 carries the post-translational modification Phosphotyrosine. Ser392 carries the post-translational modification Phosphoserine. Thr419 carries the post-translational modification Phosphothreonine. Position 424 is a phosphotyrosine (Tyr424). The actin-binding stretch occupies residues 658-680 (LNKLMTNLRSTHPHFVRCIIPNE). His756 carries the post-translational modification Pros-methylhistidine. Residues 760–774 (KFGHTKVFFKAGLLG) are actin-binding. The region spanning 784–813 (LAQLITRTQAMCRGFLARVEYKKMVERRES) is the IQ domain. Positions 845–1926 (SAETEKEMAN…ESQVNKLRVK (1082 aa)) form a coiled coil. Phosphoserine is present on residues Ser1091, Ser1095, Ser1161, and Ser1236. Phosphothreonine is present on Thr1240. Ser1242 carries the post-translational modification Phosphoserine. Thr1254 carries the phosphothreonine modification. Ser1260 bears the Phosphoserine mark. A Phosphothreonine modification is found at Thr1264. Phosphoserine is present on Ser1277. Thr1285 is modified (phosphothreonine). A phosphoserine mark is found at Ser1287, Ser1291, Ser1302, and Ser1305. Position 1463 is a phosphotyrosine (Tyr1463). Phosphothreonine is present on Thr1466. A Phosphoserine modification is found at Ser1473. Tyr1491 carries the phosphotyrosine modification. Ser1494 carries the post-translational modification Phosphoserine. Thr1500 is modified (phosphothreonine). Ser1513 is subject to Phosphoserine. The residue at position 1516 (Thr1516) is a Phosphothreonine. Phosphoserine is present on residues Ser1541, Ser1553, Ser1573, Ser1599, Ser1602, Ser1713, and Ser1725. Residues Thr1729 and Thr1735 each carry the phosphothreonine modification. Ser1738 is modified (phosphoserine).

It belongs to the TRAFAC class myosin-kinesin ATPase superfamily. Myosin family. Muscle myosin is a hexameric protein that consists of 2 heavy chain subunits (MHC), 2 alkali light chain subunits (MLC) and 2 regulatory light chain subunits (MLC-2).

It is found in the cytoplasm. It localises to the myofibril. In terms of biological role, muscle contraction. This Oryctolagus cuniculus (Rabbit) protein is Myosin-4 (MYH4).